The following is a 48-amino-acid chain: U-reduvitoxin-Pr5a (48 aa).

Positions 1–19 (MRLFLIFTFIVASLASVYG) are cleaved as a signal peptide. 3 disulfide bridges follow: Cys20-Cys34, Cys27-Cys39, and Cys33-Cys44.

It belongs to the venom Ptu1-like knottin family. In terms of tissue distribution, expressed by the venom gland.

The protein resides in the secreted. Its function is as follows. Binds reversibly and blocks P/Q-type voltage-gated calcium channels (Cav). This chain is U-reduvitoxin-Pr5a, found in Platymeris rhadamanthus (Red spot assassin bug).